A 336-amino-acid chain; its full sequence is MEVERVQDISSSSLLTEAIPLEFIRSEKEQPAITTFRGPTPAIPVVDLSDPDEESVRRAVVKASEEWGLFQVVNHGIPTELIRRLQDVGRKFFELPSSEKESVAKPEDSKDIEGYGTKLQKDPEGKKAWVDHLFHRIWPPSCVNYRFWPKNPPEYREVNEEYAVHVKKLSETLLGILSDGLGLKRDALKEGLGGEMAEYMMKINYYPPCPRPDLALGVPAHTDLSGITLLVPNEVPGLQVFKDDHWFDAEYIPSAVIVHIGDQILRLSNGRYKNVLHRTTVDKEKTRMSWPVFLEPPREKIVGPLPELTGDDNPPKFKPFAFKDYSYRKLNKLPLD.

Residues 99 to 118 (EKESVAKPEDSKDIEGYGTK) form a disordered region. Residues 196 to 296 (MAEYMMKINY…RMSWPVFLEP (101 aa)) form the Fe2OG dioxygenase domain. 204-206 (NYY) serves as a coordination point for 2-oxoglutarate. Fe cation-binding residues include His221, Asp223, and His277. 287-289 (RMS) provides a ligand contact to 2-oxoglutarate.

It belongs to the iron/ascorbate-dependent oxidoreductase family. L-ascorbate serves as cofactor. It depends on Fe(2+) as a cofactor. As to expression, expressed in young seedlings (at protein level). Expressed in roots, emerging leaves, shoot-root transition zone, trichomes, flowers and siliques. In cotyledons, expressed mostly on the adaxial side and only in guard cells on the abaxial side.

The protein resides in the cytoplasm. It is found in the nucleus. It carries out the reaction a (2R,3R)-dihydroflavonol + 2-oxoglutarate + O2 = a flavonol + succinate + CO2 + H2O. It catalyses the reaction a (2S)-flavan-4-one + 2-oxoglutarate + O2 = a (2R,3R)-dihydroflavonol + succinate + CO2. It participates in secondary metabolite biosynthesis; flavonoid biosynthesis. In terms of biological role, catalyzes the formation of flavonols from dihydroflavonols. It can act on dihydrokaempferol to produce kaempferol, on dihydroquercetin to produce quercitin and on dihydromyricetin to produce myricetin. In vitro catalyzes the oxidation of both enantiomers of naringenin to give both cis- and trans-dihydrokaempferol. The chain is Flavonol synthase/flavanone 3-hydroxylase (FLS1) from Arabidopsis thaliana (Mouse-ear cress).